We begin with the raw amino-acid sequence, 160 residues long: Invasion protein IagB (160 aa).

An N-terminal signal peptide occupies residues 1 to 19 (MHYFFIIVIWLLSINTAWA).

Belongs to the IagB/IpgF/P19 family.

In Salmonella typhi, this protein is Invasion protein IagB (iagB).